A 166-amino-acid chain; its full sequence is Protein UL5 (166 aa).

Belongs to the RL11 family. As to quaternary structure, interacts with host IQGAP1.

Its subcellular location is the host cytoplasm. Functionally, may play a role in rearrangement of cellular cytoskeleton towards an efficient viral assembly and spreading. The polypeptide is Protein UL5 (UL5) (Human cytomegalovirus (strain AD169) (HHV-5)).